A 143-amino-acid chain; its full sequence is Large ribosomal subunit protein uL13 (143 aa).

The protein belongs to the universal ribosomal protein uL13 family. As to quaternary structure, part of the 50S ribosomal subunit.

In terms of biological role, this protein is one of the early assembly proteins of the 50S ribosomal subunit, although it is not seen to bind rRNA by itself. It is important during the early stages of 50S assembly. The sequence is that of Large ribosomal subunit protein uL13 from Alkaliphilus oremlandii (strain OhILAs) (Clostridium oremlandii (strain OhILAs)).